The following is a 354-amino-acid chain: Protein NDH-DEPENDENT CYCLIC ELECTRON FLOW 5 (354 aa).

Residues 1-49 (MALVHYMNVSRSTFPLSRSSKINLSSSFASLPLQFHKNIKRLESSVPPS) constitute a chloroplast transit peptide.

Its subcellular location is the plastid. It is found in the chloroplast thylakoid membrane. Its function is as follows. Required for both formation and activity of the chloroplast NAD(P)H dehydrogenase (NDH) complex of the photosynthetic electron transport chain. May function in assembly or stabilization of the NDH complex. This chain is Protein NDH-DEPENDENT CYCLIC ELECTRON FLOW 5, found in Arabidopsis thaliana (Mouse-ear cress).